Reading from the N-terminus, the 578-residue chain is Arginine--tRNA ligase (578 aa).

A 'HIGH' region motif is present at residues 127 to 137 (PNLAKEMHVGH).

Belongs to the class-I aminoacyl-tRNA synthetase family. Monomer.

Its subcellular location is the cytoplasm. It carries out the reaction tRNA(Arg) + L-arginine + ATP = L-arginyl-tRNA(Arg) + AMP + diphosphate. The sequence is that of Arginine--tRNA ligase from Pseudomonas fluorescens (strain Pf0-1).